The primary structure comprises 319 residues: Geranylgeranyl pyrophosphate synthase (319 aa).

Isopentenyl diphosphate-binding residues include lysine 42, arginine 45, and histidine 74. Residues aspartate 81 and aspartate 85 each coordinate Mg(2+). A dimethylallyl diphosphate-binding site is contributed by arginine 90. Position 91 (arginine 91) interacts with isopentenyl diphosphate. The dimethylallyl diphosphate site is built by lysine 172, threonine 173, glutamine 210, lysine 226, and lysine 236.

The protein belongs to the FPP/GGPP synthase family. Homodimer. Requires Mg(2+) as cofactor.

It catalyses the reaction isopentenyl diphosphate + dimethylallyl diphosphate = (2E)-geranyl diphosphate + diphosphate. The enzyme catalyses isopentenyl diphosphate + (2E)-geranyl diphosphate = (2E,6E)-farnesyl diphosphate + diphosphate. The catalysed reaction is isopentenyl diphosphate + (2E,6E)-farnesyl diphosphate = (2E,6E,10E)-geranylgeranyl diphosphate + diphosphate. Its pathway is isoprenoid biosynthesis; geranyl diphosphate biosynthesis; geranyl diphosphate from dimethylallyl diphosphate and isopentenyl diphosphate: step 1/1. It participates in isoprenoid biosynthesis; farnesyl diphosphate biosynthesis; farnesyl diphosphate from geranyl diphosphate and isopentenyl diphosphate: step 1/1. It functions in the pathway isoprenoid biosynthesis; geranylgeranyl diphosphate biosynthesis; geranylgeranyl diphosphate from farnesyl diphosphate and isopentenyl diphosphate: step 1/1. In terms of biological role, catalyzes the addition of 3 molecules of isopentenyl diphosphate (IPP) onto dimethylallyl diphosphate (DMAPP) to form geranylgeranyl pyrophosphate (GGPP). Catalyzes the synthesis of geranylgeranyl pyrophosphate as a major product and of farnesyl pyrophosphate in smaller amounts. This is Geranylgeranyl pyrophosphate synthase from Geoglobus acetivorans.